Reading from the N-terminus, the 290-residue chain is Endonuclease 2 (290 aa).

A signal peptide spans 1-27 (MANQKGLHVVMMIITVWLLYAAPNIHG). A divalent metal cation-binding residues include tryptophan 28 and histidine 33. Substrate is bound at residue 28-33 (WGKEGH). Residues cysteine 37 and cysteine 68 are joined by a disulfide bond. The a divalent metal cation site is built by aspartate 72 and histidine 85. Substrate-binding positions include 72 to 76 (DRVKF), 85 to 88 (HYIN), and 94 to 99 (SYQYNR). Disulfide bonds link cysteine 93–cysteine 245, cysteine 101–cysteine 111, and cysteine 226–cysteine 232. The substrate site is built by asparagine 118 and tyrosine 136. Asparagine 118 carries N-linked (GlcNAc...) asparagine glycosylation. Asparagine 137 is a glycosylation site (N-linked (GlcNAc...) asparagine). The a divalent metal cation site is built by histidine 147, aspartate 151, histidine 157, histidine 181, and aspartate 185. A substrate binding region spans residues 147–196 (HFMGDIHQPLHVSYASDKGGNTIEVHWYTRKANLHHIWDSNIIETAEADL). An N-linked (GlcNAc...) asparagine glycan is attached at asparagine 211. Positions 283-290 (ATLNRIFG) are cleaved as a propeptide — removed in mature form.

The protein belongs to the nuclease type I family. As to quaternary structure, monomer. It depends on Mn(2+) as a cofactor. Requires Ca(2+) as cofactor. Zn(2+) serves as cofactor. Post-translationally, N-glycosylation is required for enzymatic stability and activity.

It carries out the reaction Endonucleolytic cleavage to 5'-phosphomononucleotide and 5'-phosphooligonucleotide end-products.. SsDNase activity is inhibited by the divalent cation chelator EDTA and the reducing agent DTT. Divalent metal ions (e.g. Ca(2+), Mg(2+) and Zn(2+)) and DTT represses RNase activity. RNase activity is enhanced by EDTA. Also repressed by vanadate (VO(4)(3-)) and phosphate (PO(4)(3-)) by occupying the active site. Its function is as follows. Endonuclease mostly active on RNA and ssDNA, and to a lower extent, on dsDNA. Can cleave mismatch regions in heteroduplex DNA containing single base pair mismatches or insertion/deletion bases. In contradiction with PubMed:22506810, cannot hydrolyze single-stranded DNA and does not cleave mismatches. In Arabidopsis thaliana (Mouse-ear cress), this protein is Endonuclease 2.